The chain runs to 164 residues: ATP synthase subunit b (164 aa).

Residues 6–26 (GELVGNFILVTGSVIVLLLLI) form a helical membrane-spanning segment.

It belongs to the ATPase B chain family. In terms of assembly, F-type ATPases have 2 components, F(1) - the catalytic core - and F(0) - the membrane proton channel. F(1) has five subunits: alpha(3), beta(3), gamma(1), delta(1), epsilon(1). F(0) has three main subunits: a(1), b(2) and c(10-14). The alpha and beta chains form an alternating ring which encloses part of the gamma chain. F(1) is attached to F(0) by a central stalk formed by the gamma and epsilon chains, while a peripheral stalk is formed by the delta and b chains.

It is found in the cell membrane. Functionally, f(1)F(0) ATP synthase produces ATP from ADP in the presence of a proton or sodium gradient. F-type ATPases consist of two structural domains, F(1) containing the extramembraneous catalytic core and F(0) containing the membrane proton channel, linked together by a central stalk and a peripheral stalk. During catalysis, ATP synthesis in the catalytic domain of F(1) is coupled via a rotary mechanism of the central stalk subunits to proton translocation. Component of the F(0) channel, it forms part of the peripheral stalk, linking F(1) to F(0). This is ATP synthase subunit b from Streptococcus pyogenes serotype M3 (strain ATCC BAA-595 / MGAS315).